The following is a 442-amino-acid chain: Tubulin beta chain (442 aa).

The GTP site is built by Q11, E69, S138, G142, T143, G144, N204, and N226. Residue E69 coordinates Mg(2+).

The protein belongs to the tubulin family. In terms of assembly, dimer of alpha and beta chains. A typical microtubule is a hollow water-filled tube with an outer diameter of 25 nm and an inner diameter of 15 nM. Alpha-beta heterodimers associate head-to-tail to form protofilaments running lengthwise along the microtubule wall with the beta-tubulin subunit facing the microtubule plus end conferring a structural polarity. Microtubules usually have 13 protofilaments but different protofilament numbers can be found in some organisms and specialized cells. Mg(2+) is required as a cofactor.

It localises to the cytoplasm. The protein resides in the cytoskeleton. In terms of biological role, tubulin is the major constituent of microtubules, a cylinder consisting of laterally associated linear protofilaments composed of alpha- and beta-tubulin heterodimers. Microtubules grow by the addition of GTP-tubulin dimers to the microtubule end, where a stabilizing cap forms. Below the cap, tubulin dimers are in GDP-bound state, owing to GTPase activity of alpha-tubulin. In Pneumocystis carinii, this protein is Tubulin beta chain (TUB-B).